The primary structure comprises 475 residues: MIFAKKTEAAGFKAGVKDYRLTYYTPDYKVKDTDILAAFRVTPQPGVPPEEAAAAVAAESSTGTWTTVWTDGLTSLDRYKGRCYFIETFEGQKDNQFICYIAYPLDLFEEGSVTNLFTSIVGNVFGFKALRAIRLEDLRIPVAYVKTFEGPPHGIQVERDKLNKYGRALLGCTIKPKLGLSAKNYGRAVYEGLRGGLDFTKDDENVNSQPFMRWRDRFLFVAEAIYKSQSETGEVKGHYLNATAGTSEEVLKRAECAKELGVPIVMHDFLTGGFTTNTSLSKYCRESGLLLHIHRAMHAVVDRQKNHGIHFRVLAKTLRLSGGDHLHSGTVVGKLEGDKDVTLGFVDLMRDDYVELDRSRGIYFTQDWASMGGVIPVASGGIHVWHMPALVDIFGDDACLQFGGGTLGHPWGNAPGAVANRVALEACIKIRNQGQNVLREGGNALREATKWSPELAAACEVWKEIKFEFDTIDTI.

Asn123 and Thr173 together coordinate substrate. Residue Lys175 is the Proton acceptor of the active site. Lys177 serves as a coordination point for substrate. Residues Lys201, Asp203, and Glu204 each coordinate Mg(2+). Lys201 is subject to N6-carboxylysine. The active-site Proton acceptor is the His294. Substrate-binding residues include Arg295, His327, and Ser379.

This sequence belongs to the RuBisCO large chain family. Type I subfamily. As to quaternary structure, heterohexadecamer of 8 large chains and 8 small chains. Mg(2+) is required as a cofactor.

The protein localises to the plastid. Its subcellular location is the chloroplast. It catalyses the reaction 2 (2R)-3-phosphoglycerate + 2 H(+) = D-ribulose 1,5-bisphosphate + CO2 + H2O. The catalysed reaction is D-ribulose 1,5-bisphosphate + O2 = 2-phosphoglycolate + (2R)-3-phosphoglycerate + 2 H(+). Its function is as follows. RuBisCO catalyzes two reactions: the carboxylation of D-ribulose 1,5-bisphosphate, the primary event in carbon dioxide fixation, as well as the oxidative fragmentation of the pentose substrate in the photorespiration process. Both reactions occur simultaneously and in competition at the same active site. The polypeptide is Ribulose bisphosphate carboxylase large chain (Bigelowiella natans (Pedinomonas minutissima)).